A 298-amino-acid polypeptide reads, in one-letter code: MHRSLKIFGTLTSIGMVIVLMQGALVTKTESGEGCGATWPLCFGEVIPTNPAIETIIEYSHRIVSGLLGAMVIILAIWAWRKLSHIRETKVMAILAVLFIIFQGLLGAGAVVFGQSHAILALHFGISAISLATVVLLTTLAFEDGKPNPPALIVKKGYKGYILAVFAYCYAVIYTGAYVKHTQATLACGDFPLCNGQWIPMLSGPVGAHFFHRVAGTLLLILLVVALIWTLRKYSHYRSLVWTHILCVILVLTQYATGISIVLTGNELFVAMMHALIVSILFTTLCYIVMILSRNKAV.

Residues 1–6 (MHRSLK) lie on the Cytoplasmic side of the membrane. A helical transmembrane segment spans residues 7-27 (IFGTLTSIGMVIVLMQGALVT). The Extracellular portion of the chain corresponds to 28-62 (KTESGEGCGATWPLCFGEVIPTNPAIETIIEYSHR). Residues cysteine 35 and cysteine 42 are joined by a disulfide bond. Glutamate 58 is an active-site residue. Histidine 61 is a heme o binding site. Residues 63–83 (IVSGLLGAMVIILAIWAWRKL) form a helical membrane-spanning segment. Topologically, residues 84–92 (SHIRETKVM) are cytoplasmic. A helical membrane pass occupies residues 93-113 (AILAVLFIIFQGLLGAGAVVF). The Extracellular segment spans residues 114–117 (GQSH). Residues 118–138 (AILALHFGISAISLATVVLLT) traverse the membrane as a helical segment. Histidine 123 is a binding site for heme o. Over 139–158 (TLAFEDGKPNPPALIVKKGY) the chain is Cytoplasmic. The chain crosses the membrane as a helical span at residues 159-179 (KGYILAVFAYCYAVIYTGAYV). Topologically, residues 180-209 (KHTQATLACGDFPLCNGQWIPMLSGPVGAH) are extracellular. The cysteines at positions 188 and 194 are disulfide-linked. The chain crosses the membrane as a helical span at residues 210–230 (FFHRVAGTLLLILLVVALIWT). Residue histidine 212 participates in heme b binding. Residues 231–244 (LRKYSHYRSLVWTH) are Cytoplasmic-facing. A helical transmembrane segment spans residues 245-265 (ILCVILVLTQYATGISIVLTG). Residues 266–271 (NELFVA) lie on the Extracellular side of the membrane. A helical membrane pass occupies residues 272–292 (MMHALIVSILFTTLCYIVMIL). Residue histidine 274 participates in heme b binding. The Cytoplasmic portion of the chain corresponds to 293–298 (SRNKAV).

The protein belongs to the COX15/CtaA family. Type 1 subfamily. As to quaternary structure, interacts with CtaB. Requires heme b as cofactor.

The protein localises to the cell membrane. It carries out the reaction Fe(II)-heme o + 2 A + H2O = Fe(II)-heme a + 2 AH2. The protein operates within porphyrin-containing compound metabolism; heme A biosynthesis; heme A from heme O: step 1/1. Functionally, catalyzes the conversion of heme O to heme A by two successive hydroxylations of the methyl group at C8. The first hydroxylation forms heme I, the second hydroxylation results in an unstable dihydroxymethyl group, which spontaneously dehydrates, resulting in the formyl group of heme A. The protein is Heme A synthase of Halalkalibacterium halodurans (strain ATCC BAA-125 / DSM 18197 / FERM 7344 / JCM 9153 / C-125) (Bacillus halodurans).